An 863-amino-acid chain; its full sequence is Ubiquitin carboxyl-terminal hydrolase 13 (863 aa).

Serine 114 carries the phosphoserine modification. Phosphothreonine is present on threonine 122. A UBP-type; degenerate zinc finger spans residues 187–295 (PVSKYANNLT…KHLAHFGIDM (109 aa)). Positions 211, 214, 231, and 244 each coordinate Zn(2+). A Glycyl lysine isopeptide (Lys-Gly) (interchain with G-Cter in SUMO2) cross-link involves residue lysine 311. The USP domain occupies 336-861 (TGLKNLGNSC…LGYMYFYRRI (526 aa)). The Nucleophile role is filled by cysteine 345. Residue lysine 405 forms a Glycyl lysine isopeptide (Lys-Gly) (interchain with G-Cter in SUMO2) linkage. 2 UBA domains span residues 652-693 (DIDE…IVVH) and 727-767 (QPPE…IFSH). Residue histidine 823 is the Proton acceptor of the active site.

The protein belongs to the peptidase C19 family. As to quaternary structure, interacts with UFD1. Interacts (via UBA domains) with SIAH2 (when ubiquitinated). Interacts with BAG6; the interaction is direct and may mediate UBL4A deubiquitination. Interacts (via UBA 2 domain) with AMFR; the interaction is direct. Interacts with UBL4A; may be indirect via BAG6. Interacts with NEDD4.

It is found in the cytoplasm. The enzyme catalyses Thiol-dependent hydrolysis of ester, thioester, amide, peptide and isopeptide bonds formed by the C-terminal Gly of ubiquitin (a 76-residue protein attached to proteins as an intracellular targeting signal).. Its activity is regulated as follows. Specifically inhibited by spautin-1 (specific and potent autophagy inhibitor-1), a derivative of MBCQ that binds to USP13 and inhibits deubiquitinase activity. Regulated by PIK3C3/VPS34-containing complexes. The weak deubiquitinase activity in vitro suggests the existence of some mechanism that activates the enzyme. Deubiquitinase that mediates deubiquitination of target proteins such as BECN1, MITF, SKP2 and USP10 and is involved in various processes such as autophagy, endoplasmic reticulum-associated degradation (ERAD), cell cycle progression or DNA damage response. Component of a regulatory loop that controls autophagy and p53/TP53 levels: mediates deubiquitination of BECN1, a key regulator of autophagy, leading to stabilize the PIK3C3/VPS34-containing complexes. Alternatively, forms with NEDD4 a deubiquitination complex, which subsequently stabilizes VPS34 to promote autophagy. Also deubiquitinates USP10, an essential regulator of p53/TP53 stability. In turn, PIK3C3/VPS34-containing complexes regulate USP13 stability, suggesting the existence of a regulatory system by which PIK3C3/VPS34-containing complexes regulate p53/TP53 protein levels via USP10 and USP13. Recruited by nuclear UFD1 and mediates deubiquitination of SKP2, thereby regulating endoplasmic reticulum-associated degradation (ERAD). Also regulates ERAD through the deubiquitination of UBL4A a component of the BAG6/BAT3 complex. Mediates stabilization of SIAH2 independently of deubiquitinase activity: binds ubiquitinated SIAH2 and acts by impairing SIAH2 autoubiquitination. Regulates the cell cycle progression by stabilizing cell cycle proteins such as SKP2 and AURKB. In addition, plays an important role in maintaining genomic stability and in DNA replication checkpoint activation via regulation of RAP80 and TOPBP1. Deubiquitinates the multifunctional protein HMGB1 and subsequently drives its nucleocytoplasmic localization and its secretion. Positively regulates type I and type II interferon signalings by deubiquitinating STAT1 but negatively regulates antiviral response by deubiquitinating STING1. In Bos taurus (Bovine), this protein is Ubiquitin carboxyl-terminal hydrolase 13 (USP13).